We begin with the raw amino-acid sequence, 1467 residues long: Helicase ARIP4 (1467 aa).

2 disordered regions span residues methionine 1–proline 150 and aspartate 186–histidine 234. Positions proline 11 to serine 49 are enriched in acidic residues. The span at threonine 72–serine 82 shows a compositional bias: low complexity. Residues lysine 100 to lysine 115 are compositionally biased toward basic residues. Glycyl lysine isopeptide (Lys-Gly) (interchain with G-Cter in SUMO2) cross-links involve residues lysine 115 and lysine 127. Basic and acidic residues-rich tracts occupy residues glutamate 133–tyrosine 147 and glutamate 192–valine 201. A Glycyl lysine isopeptide (Lys-Gly) (interchain with G-Cter in SUMO2) cross-link involves residue lysine 272. Positions arginine 292 to aspartate 512 constitute a Helicase ATP-binding domain. Position 305–312 (histidine 305–threonine 312) interacts with ATP. Positions aspartate 463 to histidine 466 match the DEAH box motif. The LXXLL motif 1 signature appears at leucine 551–leucine 555. A disordered region spans residues glycine 649–serine 673. Residues lysine 665, lysine 682, lysine 759, lysine 901, lysine 1014, and lysine 1018 each participate in a glycyl lysine isopeptide (Lys-Gly) (interchain with G-Cter in SUMO2) cross-link. A Helicase C-terminal domain is found at histidine 728–leucine 896. The segment at arginine 1120–aspartate 1171 is disordered. A compositionally biased stretch (polar residues) spans serine 1136–serine 1155. Phosphoserine is present on residues serine 1169 and serine 1172. Disordered stretches follow at residues aspartate 1184 to glycine 1221 and proline 1247 to tyrosine 1284. At threonine 1260 the chain carries Phosphothreonine. Residues leucine 1329–leucine 1333 carry the LXXLL motif 2 motif. The tract at residues alanine 1445–lysine 1467 is disordered. Residues asparagine 1452–lysine 1467 show a composition bias toward acidic residues.

This sequence belongs to the SNF2/RAD54 helicase family. Interacts with AR via its N-terminus. Interacts with DYRK1A. Binds DNA and mononucleosomes, but does not seem to form large multiprotein complexes. Sumoylated.

It localises to the nucleus. It carries out the reaction ATP + H2O = ADP + phosphate + H(+). With respect to regulation, enzyme activity is enhanced by dsDNA (double-stranded DNA) and ssDNA (single-stranded DNA). In terms of biological role, DNA helicase that modulates androgen receptor (AR)-dependent transactivation in a promoter-dependent manner. Not able to remodel mononucleosomes in vitro. This chain is Helicase ARIP4 (RAD54L2), found in Homo sapiens (Human).